We begin with the raw amino-acid sequence, 394 residues long: Chaperone protein DnaJ (394 aa).

The J domain maps to 4 to 68; the sequence is DYYEILGVSR…ELRARYDRFG (65 aa). The CR-type zinc finger occupies 136–218; the sequence is GGEKQIRISH…CNGEGLAQTT (83 aa). The Zn(2+) site is built by Cys149, Cys152, Cys166, Cys169, Cys192, Cys195, Cys206, and Cys209. CXXCXGXG motif repeat units follow at residues 149–156, 166–173, 192–199, and 206–213; these read CPVCGGSG, CPTCGGAG, and CYNCNGEG.

Belongs to the DnaJ family. As to quaternary structure, homodimer. Zn(2+) is required as a cofactor.

Its subcellular location is the cytoplasm. Its function is as follows. Participates actively in the response to hyperosmotic and heat shock by preventing the aggregation of stress-denatured proteins and by disaggregating proteins, also in an autonomous, DnaK-independent fashion. Unfolded proteins bind initially to DnaJ; upon interaction with the DnaJ-bound protein, DnaK hydrolyzes its bound ATP, resulting in the formation of a stable complex. GrpE releases ADP from DnaK; ATP binding to DnaK triggers the release of the substrate protein, thus completing the reaction cycle. Several rounds of ATP-dependent interactions between DnaJ, DnaK and GrpE are required for fully efficient folding. Also involved, together with DnaK and GrpE, in the DNA replication of plasmids through activation of initiation proteins. This Synechococcus sp. (strain JA-3-3Ab) (Cyanobacteria bacterium Yellowstone A-Prime) protein is Chaperone protein DnaJ.